Consider the following 221-residue polypeptide: Small ribosomal subunit protein uS3 (221 aa).

The KH type-2 domain maps to Ile-39–Lys-107.

Belongs to the universal ribosomal protein uS3 family. Part of the 30S ribosomal subunit. Forms a tight complex with proteins S10 and S14.

Its function is as follows. Binds the lower part of the 30S subunit head. Binds mRNA in the 70S ribosome, positioning it for translation. The polypeptide is Small ribosomal subunit protein uS3 (Desulforamulus reducens (strain ATCC BAA-1160 / DSM 100696 / MI-1) (Desulfotomaculum reducens)).